The primary structure comprises 50 residues: uncharacterized protein (50 aa).

This is an uncharacterized protein from Saccharomyces cerevisiae (strain ATCC 204508 / S288c) (Baker's yeast).